We begin with the raw amino-acid sequence, 314 residues long: Porphobilinogen deaminase (314 aa).

S-(dipyrrolylmethanemethyl)cysteine is present on Cys-234.

This sequence belongs to the HMBS family. Monomer. Dipyrromethane serves as cofactor.

It carries out the reaction 4 porphobilinogen + H2O = hydroxymethylbilane + 4 NH4(+). It participates in porphyrin-containing compound metabolism; protoporphyrin-IX biosynthesis; coproporphyrinogen-III from 5-aminolevulinate: step 2/4. In terms of biological role, tetrapolymerization of the monopyrrole PBG into the hydroxymethylbilane pre-uroporphyrinogen in several discrete steps. This is Porphobilinogen deaminase from Mycobacterium ulcerans (strain Agy99).